We begin with the raw amino-acid sequence, 349 residues long: GMP reductase (349 aa).

Residue Ile108–Ala131 participates in NADP(+) binding. The K(+) site is built by Gly181 and Gly183. The active-site Thioimidate intermediate is Cys186. Residue Ile216–Val239 coordinates NADP(+).

Belongs to the IMPDH/GMPR family. GuaC type 1 subfamily. Homotetramer.

It catalyses the reaction IMP + NH4(+) + NADP(+) = GMP + NADPH + 2 H(+). In terms of biological role, catalyzes the irreversible NADPH-dependent deamination of GMP to IMP. It functions in the conversion of nucleobase, nucleoside and nucleotide derivatives of G to A nucleotides, and in maintaining the intracellular balance of A and G nucleotides. In Buchnera aphidicola subsp. Acyrthosiphon pisum (strain Tuc7), this protein is GMP reductase.